The sequence spans 328 residues: Diaminopimelate epimerase (328 aa).

2 residues coordinate substrate: asparagine 14 and asparagine 73. Cysteine 82 (proton donor) is an active-site residue. Substrate-binding positions include 83-84 (GN), asparagine 170, asparagine 206, and 224-225 (ER). The Proton acceptor role is filled by cysteine 233. 234–235 (GT) contacts substrate.

Belongs to the diaminopimelate epimerase family. In terms of assembly, homodimer.

It localises to the cytoplasm. The catalysed reaction is (2S,6S)-2,6-diaminopimelate = meso-2,6-diaminopimelate. It participates in amino-acid biosynthesis; L-lysine biosynthesis via DAP pathway; DL-2,6-diaminopimelate from LL-2,6-diaminopimelate: step 1/1. Catalyzes the stereoinversion of LL-2,6-diaminopimelate (L,L-DAP) to meso-diaminopimelate (meso-DAP), a precursor of L-lysine and an essential component of the bacterial peptidoglycan. The polypeptide is Diaminopimelate epimerase (Listeria welshimeri serovar 6b (strain ATCC 35897 / DSM 20650 / CCUG 15529 / CIP 8149 / NCTC 11857 / SLCC 5334 / V8)).